A 700-amino-acid polypeptide reads, in one-letter code: Auxin response factor 18 (700 aa).

The segment at residues 128 to 230 (FAKTLTQSDA…DLCVGIRRAK (103 aa)) is a DNA-binding region (TF-B3). Disordered regions lie at residues 234–254 (VGGPEFLPPPPPPPPTPAAGG) and 560–595 (VKKSSSDGNAENTVNKSNSDVSSPRSNQNGTTDNLS). Over residues 239-250 (FLPPPPPPPPTP) the composition is skewed to pro residues. The span at 565–594 (SDGNAENTVNKSNSDVSSPRSNQNGTTDNL) shows a compositional bias: polar residues. The region spanning 614–697 (TGHCKVFMQS…NILTDTSGDN (84 aa)) is the PB1 domain.

Belongs to the ARF family. In terms of assembly, homodimers and heterodimers. As to expression, expressed in roots, culms, leaves and young panicles.

The protein localises to the nucleus. Auxin response factors (ARFs) are transcriptional factors that bind specifically to the DNA sequence 5'-TGTCTC-3' found in the auxin-responsive promoter elements (AuxREs). In Oryza sativa subsp. japonica (Rice), this protein is Auxin response factor 18 (ARF18).